Consider the following 343-residue polypeptide: Stimulator of interferon genes protein homolog (343 aa).

The N-linked (GlcNAc...) asparagine glycan is linked to N84. 2 helical membrane-spanning segments follow: residues 87-107 and 109-129; these read IYLIVGFLLVAFFRISVTGNY and NVMPTTLFLFQMPLYWIWSFT. N157 contacts 3',2'-cGAMP. The N-linked (GlcNAc...) asparagine glycan is linked to N187. The helical transmembrane segment at 195–215 threads the bilayer; the sequence is LVILIPDEMFVNGVLESHLLD. Residues R232, K235, E255, T258, and S262 each coordinate 3',2'-cGAMP. N-linked (GlcNAc...) asparagine glycans are attached at residues N270 and N333.

This sequence belongs to the STING family.

The protein resides in the endoplasmic reticulum membrane. Functionally, facilitator of innate immune signaling that binds cyclic dinucleotides produced in response to infection by bacteria and/or viruses, and promotes the activation of the NF-kappa-B transcription factor Rel (Relish). Recognizes and binds cyclic di-GMP (c-di-GMP), a cyclic dinucleotide messenger produced by bacteria such as L.monocytogenes, leading to activation of the peptidoglycan recognition protein (IMD) signaling pathway and activation of Rel (Relish). Innate immune response is triggered in response to double-stranded RNA from viruses delivered to the cytoplasm: Sting acts by specifically binding cyclic dinucleotides 3',2'-cGAMP and 2',3'-cGAMP produced by cGlr1 and cGlr2 in response to RNA virus in the cytosol. Has a strong preference for 3',2'-cGAMP compared to other cyclic dinucleotides such as 2',3'-cGAMP or 3'3'-c-di-GMP. Upon binding to 3',2'-cGAMP, activates an antiviral immune response, leading to the activation of Rel (Relish). Activated in brain in response to Zika virus infection, leading to autophagy. The protein is Stimulator of interferon genes protein homolog of Drosophila melanogaster (Fruit fly).